Consider the following 556-residue polypeptide: Dihydroxy-acid dehydratase (556 aa).

Residue Cys-47 coordinates [2Fe-2S] cluster. Asp-79 lines the Mg(2+) pocket. Residue Cys-120 participates in [2Fe-2S] cluster binding. Mg(2+) contacts are provided by Asp-121 and Lys-122. The residue at position 122 (Lys-122) is an N6-carboxylysine. [2Fe-2S] cluster is bound at residue Cys-192. Glu-444 serves as a coordination point for Mg(2+). Ser-470 (proton acceptor) is an active-site residue.

Belongs to the IlvD/Edd family. As to quaternary structure, homodimer. Requires [2Fe-2S] cluster as cofactor. The cofactor is Mg(2+).

It carries out the reaction (2R)-2,3-dihydroxy-3-methylbutanoate = 3-methyl-2-oxobutanoate + H2O. The enzyme catalyses (2R,3R)-2,3-dihydroxy-3-methylpentanoate = (S)-3-methyl-2-oxopentanoate + H2O. It functions in the pathway amino-acid biosynthesis; L-isoleucine biosynthesis; L-isoleucine from 2-oxobutanoate: step 3/4. Its pathway is amino-acid biosynthesis; L-valine biosynthesis; L-valine from pyruvate: step 3/4. Functions in the biosynthesis of branched-chain amino acids. Catalyzes the dehydration of (2R,3R)-2,3-dihydroxy-3-methylpentanoate (2,3-dihydroxy-3-methylvalerate) into 2-oxo-3-methylpentanoate (2-oxo-3-methylvalerate) and of (2R)-2,3-dihydroxy-3-methylbutanoate (2,3-dihydroxyisovalerate) into 2-oxo-3-methylbutanoate (2-oxoisovalerate), the penultimate precursor to L-isoleucine and L-valine, respectively. This chain is Dihydroxy-acid dehydratase, found in Prochlorococcus marinus (strain NATL2A).